A 113-amino-acid chain; its full sequence is Seminal vesicle secretory protein 4 (113 aa).

Residues 1 to 21 (MNSTSLFLFSLLLLLVTGAIG) form the signal peptide. The segment at 31–113 (SEETVRESFS…KSRFSQDALE (83 aa)) is disordered. Low complexity-rich tracts occupy residues 38–50 (SFSMGSRGHMSRS) and 83–98 (IISSSSDGSNMEGESS).

Belongs to the SVP2/SVP5/SVP6 family. As to expression, testis.

Its subcellular location is the secreted. It localises to the extracellular space. The sequence is that of Seminal vesicle secretory protein 4 (Svs4) from Mus musculus (Mouse).